Here is a 110-residue protein sequence, read N- to C-terminus: QAVVTQESALTTSPGETVTLTCRSNTGAVTTSNYANWVQQKPDHLFTGLIGNTNNRAPGVPARFSGSLIGNKAALTITGAQTEDEAIYFCALWYSNRWVFGGGTKLTVLG.

The 106-residue stretch at 1-106 folds into the Ig-like domain; it reads QAVVTQESAL…RWVFGGGTKL (106 aa).

This is Ig lambda-1 chain V region S178 from Mus musculus (Mouse).